The following is a 355-amino-acid chain: Anhydro-N-acetylmuramic acid kinase (355 aa).

Residue 9-16 coordinates ATP; the sequence is GTSLDGVD.

This sequence belongs to the anhydro-N-acetylmuramic acid kinase family.

It carries out the reaction 1,6-anhydro-N-acetyl-beta-muramate + ATP + H2O = N-acetyl-D-muramate 6-phosphate + ADP + H(+). It participates in amino-sugar metabolism; 1,6-anhydro-N-acetylmuramate degradation. The protein operates within cell wall biogenesis; peptidoglycan recycling. In terms of biological role, catalyzes the specific phosphorylation of 1,6-anhydro-N-acetylmuramic acid (anhMurNAc) with the simultaneous cleavage of the 1,6-anhydro ring, generating MurNAc-6-P. Is required for the utilization of anhMurNAc either imported from the medium or derived from its own cell wall murein, and thus plays a role in cell wall recycling. This Paramagnetospirillum magneticum (strain ATCC 700264 / AMB-1) (Magnetospirillum magneticum) protein is Anhydro-N-acetylmuramic acid kinase.